The primary structure comprises 287 residues: Hydroxysteroid 11-beta-dehydrogenase 1-like protein (287 aa).

Residues M1–A15 form the signal peptide. Residues G36–T62, D87–M88, and N114–L116 contribute to the NADP(+) site. Substrate is bound at residue S165. The active-site Proton acceptor is Y178. Residues Y178 to K182 and G211 to S217 contribute to the NADP(+) site. An N-linked (GlcNAc...) asparagine glycan is attached at N280.

It belongs to the short-chain dehydrogenases/reductases (SDR) family.

It localises to the secreted. It catalyses the reaction cortisone + NADPH + H(+) = cortisol + NADP(+). Unidirectional NADP(+)-dependent cortisol dehydrogenase (in vitro). This chain is Hydroxysteroid 11-beta-dehydrogenase 1-like protein (HSD11B1L), found in Bos taurus (Bovine).